Here is an 877-residue protein sequence, read N- to C-terminus: MTDNQIPKDYNHKNEVKWQKKWQEEDIYRFIGSGTKPRYIIDTPPPYPTGSIHMGHVLNWVYMDIIARFKRMRGFDVLFPQGWDCHGLPTEVKVEETHNIKKSDVSREEFRRLCVELTQENIRMMKEQMQRLGFSQDWNHEFVTMTPEYMRRTQLSFLRMYRDGLIYQGVHPVNWCPRCETAIAFAEVEYIENETNLNYVRFPVEGADEHITIATTRPELMAACVAVVVHPDDERFREFEDKLIEVPLFGQKVKLIKDPEVDPEFGTGAVMVCTFGDKTDVSWVNRHGLDVIDAIDERGYMTEAAGKYQGLTIAECKEKIVEDLENEGFLLKKEPVRQNVGTCWRCKTPIEILVKKQWFVAVKKLIPQVREAAEEMKWVPGHMKTRLLNWTGSMDWDWCISRQRIFATPIPVWYCSECGRVHVADEEMLPVDPTRDGPGITCECGSTEFIGEEDVLDTWMDSSISPLSVAGWPDESYRELFPADLRPQGHDIIRTWAFYTILRCMALTGEKPFSEIVINGMVFGEDGHKMSKSRGNVIAPEEVLEDYGADALRLWAAGSVPGSDVPFAWKDVKYGYKFLRKFWNAFRFISIHLTENPEVEARPMDRWILSRLMNLVAEVTESLDDYNFAAAVNRVQTFIWHDFCDEYIEAVKYRLYSDEDPESRMAAQNTLRMVLDTCLRLLAPVAPHFTEEVHQHVGEGSIHLRGWPEHIPEIVDPEIERSGDLAVEIIGEIRRFKSSSKMPLNAPLKAATIYTDNESAEMIKPFLDDIAGTMNIGDISLVAGKPEITERAVELEPRMEKIGPEFRSDAPAIISWLTGADPHEVYEEIQRNGEIEVEGNRLTMDHISFRKEVIGTAGERVDVLNLDEPEVIIEIVR.

The 'HIGH' region motif lies at 46–56 (PYPTGSIHMGH). The 'KMSKS' region signature appears at 529 to 533 (KMSKS). Lysine 532 provides a ligand contact to ATP.

It belongs to the class-I aminoacyl-tRNA synthetase family. ValS type 2 subfamily.

It localises to the cytoplasm. The catalysed reaction is tRNA(Val) + L-valine + ATP = L-valyl-tRNA(Val) + AMP + diphosphate. Its function is as follows. Catalyzes the attachment of valine to tRNA(Val). As ValRS can inadvertently accommodate and process structurally similar amino acids such as threonine, to avoid such errors, it has a 'posttransfer' editing activity that hydrolyzes mischarged Thr-tRNA(Val) in a tRNA-dependent manner. This is Valine--tRNA ligase from Methanothermobacter thermautotrophicus (strain ATCC 29096 / DSM 1053 / JCM 10044 / NBRC 100330 / Delta H) (Methanobacterium thermoautotrophicum).